The primary structure comprises 1260 residues: Agglutinin-like protein 1 (1260 aa).

The first 17 residues, 1 to 17, serve as a signal peptide directing secretion; that stretch reads MLQQFTLLFLYLSIASA. Intrachain disulfides connect cysteine 73–cysteine 150, cysteine 96–cysteine 112, cysteine 205–cysteine 298, and cysteine 227–cysteine 256. ALS repeat units follow at residues 365–396, 401–432, and 438–469; these read TTITTSYVGVTTSYSTKTAPIGETATVIVDVP, TTVTSEWTGTITTTTTRTNPTDSIDTVVVQVP, and VSTTEYWSQSYATTTTVTAPPGGTDTVIIREP. Asparagine 471 carries an N-linked (GlcNAc...) asparagine glycan. An ALS 4 repeat occupies 474–505; that stretch reads VTTTEYWSQSFATTTTVTAPPGETDTVIIREP. N-linked (GlcNAc...) asparagine glycosylation occurs at asparagine 507. The ALS 5 repeat unit spans residues 510-541; that stretch reads VTTTEYWSQSYATTTTVTAPPGGTDTVLIREP. A glycan (N-linked (GlcNAc...) asparagine) is linked at asparagine 543. An ALS 6 repeat occupies 546 to 577; sequence VTTTEYWSQSYATTTTVTAPPGGTDTVIIREP. Residue asparagine 579 is glycosylated (N-linked (GlcNAc...) asparagine). An ALS 7 repeat occupies 582 to 613; that stretch reads VTTTEYWSQSYATTTTITAPPGETDTVIIREP. Asparagine 615 is a glycosylation site (N-linked (GlcNAc...) asparagine). The stretch at 618 to 649 is one ALS 8 repeat; that stretch reads VTTTEYWSQSYATTTTVTAPPGGTDTVLIREP. N-linked (GlcNAc...) asparagine glycosylation is present at asparagine 651. One copy of the ALS 9 repeat lies at 654–685; it reads VTTTEYWSQSYATTTTVTAPPGGTDTVLIREP. N-linked (GlcNAc...) asparagine glycosylation occurs at asparagine 687. An ALS 10 repeat occupies 690 to 721; sequence VTTTEYWSQSYATTTTVTAPPGGTDTVIIREP. N-linked (GlcNAc...) asparagine glycosylation occurs at asparagine 723. One copy of the ALS 11 repeat lies at 726–757; the sequence is VTTTEYWSQSYATTTTVTAPPGGTDTVIIREP. A glycan (N-linked (GlcNAc...) asparagine) is linked at asparagine 759. The stretch at 762-791 is one ALS 12 repeat; the sequence is VTTTEYWSQSFATTTTVTAPPGGTDTVIIY. 4 N-linked (GlcNAc...) asparagine glycosylation sites follow: asparagine 820, asparagine 886, asparagine 918, and asparagine 973. 2 stretches are compositionally biased toward polar residues: residues 896 to 918 and 964 to 979; these read PTASTMSDSLSSTDGISATSSDN and KVTFTSNGDNQSGTHD. Disordered regions lie at residues 896 to 924 and 954 to 1226; these read PTASTMSDSLSSTDGISATSSDNVSKSGV and SIPS…SSSP. Residues 980–995 are compositionally biased toward low complexity; that stretch reads SQSTSTEIEIVTTSST. Over residues 1002–1062 the composition is skewed to polar residues; it reads VSSNTDLTSE…PTVATSTLAS (61 aa). N-linked (GlcNAc...) asparagine glycosylation is found at asparagine 1045 and asparagine 1068. The segment covering 1073–1090 has biased composition (polar residues); the sequence is HESASTSLKPSMGENSGL. Low complexity predominate over residues 1091–1110; it reads TTSTEIEATTTSPTEAPSPA. A compositionally biased stretch (polar residues) spans 1111-1154; it reads VSSGTDVTTEPTDTREQPTTLSTTSKTNSESVATTQATNENGGK. 2 stretches are compositionally biased toward low complexity: residues 1155–1176 and 1197–1226; these read SPSTDLTSSLTTGTSASTSANS and SHSTSVTNSNSIVSNTPQTTLSQQVTSSSP. The GPI-anchor amidated glycine moiety is linked to residue glycine 1238. Positions 1239-1260 are cleaved as a propeptide — removed in mature form; sequence SGSIIQHSTWLYGLITLLSLFI.

It belongs to the ALS family. In terms of processing, the GPI-anchor is attached to the protein in the endoplasmic reticulum and serves to target the protein to the cell surface. There, the glucosamine-inositol phospholipid moiety is cleaved off and the GPI-modified mannoprotein is covalently attached via its lipidless GPI glycan remnant to the 1,6-beta-glucan of the outer cell wall layer.

Its subcellular location is the cell membrane. It is found in the secreted. It localises to the cell wall. Its function is as follows. Major cell surface adhesion protein which mediates both yeast-to-host tissue adherence and yeast aggregation. Acts as a downstream effector of the EFG1 regulatory pathway. Required for rapamycin-induced aggregation of C.albicans. Binds glycans and mediates adherence to endothelial and epithelial cells, thereby playing an important role in the pathogenesis of C.albicans infections. This is Agglutinin-like protein 1 (ALS1) from Candida albicans (strain SC5314 / ATCC MYA-2876) (Yeast).